The following is a 129-amino-acid chain: Small ribosomal subunit protein uS11 (129 aa).

Belongs to the universal ribosomal protein uS11 family. In terms of assembly, part of the 30S ribosomal subunit. Interacts with proteins S7 and S18. Binds to IF-3.

Located on the platform of the 30S subunit, it bridges several disparate RNA helices of the 16S rRNA. Forms part of the Shine-Dalgarno cleft in the 70S ribosome. This Bacillus cereus (strain G9842) protein is Small ribosomal subunit protein uS11.